Consider the following 274-residue polypeptide: Large ribosomal subunit protein uL2cz/uL2cy (274 aa).

Disordered stretches follow at residues 1–23 and 224–274; these read MAIH…SQVK and NPVD…RRSK.

This sequence belongs to the universal ribosomal protein uL2 family. Part of the 50S ribosomal subunit.

The protein localises to the plastid. It is found in the chloroplast. The chain is Large ribosomal subunit protein uL2cz/uL2cy (rpl2-A) from Vitis vinifera (Grape).